Consider the following 222-residue polypeptide: Probable transaldolase (222 aa).

Catalysis depends on Lys91, which acts as the Schiff-base intermediate with substrate.

It belongs to the transaldolase family. Type 3B subfamily.

It is found in the cytoplasm. It carries out the reaction D-sedoheptulose 7-phosphate + D-glyceraldehyde 3-phosphate = D-erythrose 4-phosphate + beta-D-fructose 6-phosphate. The protein operates within carbohydrate degradation; pentose phosphate pathway; D-glyceraldehyde 3-phosphate and beta-D-fructose 6-phosphate from D-ribose 5-phosphate and D-xylulose 5-phosphate (non-oxidative stage): step 2/3. Functionally, transaldolase is important for the balance of metabolites in the pentose-phosphate pathway. The sequence is that of Probable transaldolase from Chlorobaculum parvum (strain DSM 263 / NCIMB 8327) (Chlorobium vibrioforme subsp. thiosulfatophilum).